We begin with the raw amino-acid sequence, 196 residues long: Adenylate kinase (196 aa).

Gly-9–Thr-17 is a binding site for ATP.

This sequence belongs to the archaeal adenylate kinase family.

It is found in the cytoplasm. The catalysed reaction is AMP + ATP = 2 ADP. In Thermococcus onnurineus (strain NA1), this protein is Adenylate kinase.